The chain runs to 453 residues: Insulinoma-associated protein 1b (453 aa).

Positions 1–20 are SNAG domain; that stretch reads MPKGFLVKRNKKAALVSYRI. The disordered stretch occupies residues 140 to 179; that stretch reads NSNRSGTASGAHAPAIQTGAKRPSADAAERKVSSKSAKKP. The span at 162 to 171 shows a compositional bias: basic and acidic residues; the sequence is PSADAAERKV. Residues 252–274 form a C2H2-type 1 zinc finger; sequence YRCPECEKVFSCPANLASHRRWH. Residues 298 to 318 form a disordered region; the sequence is AEFPSDRDTPSPGLSESGSED. 3 consecutive C2H2-type zinc fingers follow at residues 321–343, 383–406, and 412–435; these read YDCQ…ILGH, LTCP…RLLH, and FPCK…NKCH.

This sequence belongs to the INSM1 family.

The protein localises to the nucleus. Its function is as follows. May act as a transcriptional regulator. May play a role in neurogenesis and neuroendocrine cell differentiation during embryonic development. The chain is Insulinoma-associated protein 1b (insm1b) from Danio rerio (Zebrafish).